Consider the following 191-residue polypeptide: Ribosome maturation factor RimM (191 aa).

In terms of domain architecture, PRC barrel spans 114–191 (EDEYYWVDLI…RIVVDWQPDY (78 aa)).

This sequence belongs to the RimM family. Binds ribosomal protein uS19.

It localises to the cytoplasm. Its function is as follows. An accessory protein needed during the final step in the assembly of 30S ribosomal subunit, possibly for assembly of the head region. Essential for efficient processing of 16S rRNA. May be needed both before and after RbfA during the maturation of 16S rRNA. It has affinity for free ribosomal 30S subunits but not for 70S ribosomes. This chain is Ribosome maturation factor RimM, found in Paracidovorax citrulli (strain AAC00-1) (Acidovorax citrulli).